The following is a 478-amino-acid chain: Centromere DNA-binding protein complex CBF3 subunit C (478 aa).

Residues 206–251 (EVGEEKDVDVSGANSDENSSPSSTIKNKKRSASKRSHSDNGNVGAT) form a disordered region. Residues 217-230 (GANSDENSSPSSTI) show a composition bias toward polar residues. The segment covering 231-240 (KNKKRSASKR) has biased composition (basic residues).

As to quaternary structure, component of the CBF3 copmplex, which is formed of CBF3A/CBF2, CBF3B/CEP3, CBF3C/CTF13 and CBF3D. CBF3C interacts with CBF3D and SGT1.

The protein resides in the nucleus. The protein localises to the chromosome. Its subcellular location is the centromere. Acts as a central component of the centromere DNA-binding protein complex CBF3, which is essential for chromosome segregation and movement of centromeres along microtubules. CBF3 is required for the recruitment of other kinetochore complexes to CEN DNA. It plays a role in the attachment of chromosomes to the spindle and binds selectively to a highly conserved DNA sequence called CDEIII, found in centromers and in several promoters. The association of CBF3C with CBF3D and SGT1 is required for CBF3C activation and CBF3 assembly. This is Centromere DNA-binding protein complex CBF3 subunit C (CTF13) from Saccharomyces cerevisiae (strain ATCC 204508 / S288c) (Baker's yeast).